Here is a 303-residue protein sequence, read N- to C-terminus: MLSPAKTPAGIRAEPLVSLENVGVLRNGRWLVRGVDFSVSRGEIVTLIGPNGSGKSTSAKAAIGVLKPDEGRVERKAGLKVGYVPQKLSIDWTLPLSVRRLMTLTGPLPERDMLSALESAGIAHMLDAEVQHLSGGEFQRALMARAIARKPDLLVLDEPVQGVDFSGEIVLYDLIKSIRNATGCGILLISHDLHVVMAETDTVICLNGHVCCRGTPESVSRSPEYVRLFGSRAAQTLAVYSHHHDHTHLPDGRVQHADGTVTDHCHPDDGHHAHEHGHAGHEHDHDHPDHAHPHAHEAGERHA.

The ABC transporter domain occupies valine 17–arginine 232. Glycine 49–serine 56 contributes to the ATP binding site. The disordered stretch occupies residues aspartate 263–alanine 303.

The protein belongs to the ABC transporter superfamily. Zinc importer (TC 3.A.1.15.5) family. In terms of assembly, the complex is composed of two ATP-binding proteins (ZnuC), two transmembrane proteins (ZnuB) and a solute-binding protein (ZnuA).

Its subcellular location is the cell inner membrane. It carries out the reaction Zn(2+)(out) + ATP(in) + H2O(in) = Zn(2+)(in) + ADP(in) + phosphate(in) + H(+)(in). Its function is as follows. Part of the ABC transporter complex ZnuABC involved in zinc import. Responsible for energy coupling to the transport system. The chain is Zinc import ATP-binding protein ZnuC from Rhizobium johnstonii (strain DSM 114642 / LMG 32736 / 3841) (Rhizobium leguminosarum bv. viciae).